An 82-amino-acid chain; its full sequence is uncharacterized protein (82 aa).

2 helical membrane passes run 32-52 (PFSI…IGIL) and 59-79 (SKPL…FNII).

It is found in the cell membrane. This is an uncharacterized protein from Rickettsia prowazekii (strain Madrid E).